Reading from the N-terminus, the 253-residue chain is Transmembrane protein 51 (253 aa).

Transmembrane regions (helical) follow at residues 17 to 37 (IGLG…VPGF) and 65 to 85 (VAYV…CLSI). Disordered stretches follow at residues 93–133 (QGED…YVPS) and 164–253 (LTGL…RPPD). Acidic residues predominate over residues 113 to 124 (EDSQEEEEEDEE). Phosphoserine is present on Ser115. Residues 164–176 (LTGLDETTPTSTR) show a composition bias toward polar residues. Phosphoserine is present on residues Ser182 and Ser192. The segment covering 194–205 (LAKRLKPLKVRR) has biased composition (basic residues). Residues 206–217 (IKSEKLHLKDFR) are compositionally biased toward basic and acidic residues. A compositionally biased stretch (pro residues) spans 224–238 (NVPPPSIEPLTPPPQ). Over residues 242–253 (VQEKAPDTRPPD) the composition is skewed to basic and acidic residues.

It localises to the membrane. The sequence is that of Transmembrane protein 51 (TMEM51) from Homo sapiens (Human).